The following is a 207-amino-acid chain: Protein lin-7 homolog B (207 aa).

Positions 1 to 13 match the Kinase interacting site motif; that stretch reads MAALVEPLGLERD. Positions 10–65 constitute an L27 domain; it reads LERDVSRAVELLERLQRSGELPPQKLQALQRVLQSRFCSAIREVYEQLYDTLDITG. The region spanning 93–175 is the PDZ domain; that stretch reads VVELPKTDEG…SVKLVVRYTP (83 aa). The segment at 187–207 is disordered; it reads KMRSARRRQQHHSYSSLESRG. The segment covering 198 to 207 has biased composition (polar residues); that stretch reads HSYSSLESRG.

The protein belongs to the lin-7 family. In terms of assembly, forms two exclusive ternary complexes with CASK and CASKIN1. The brain-specific heterotrimeric complex (LIN-10-LIN-2-LIN-7 complex) composed of at least APBA1, CASK, and LIN7, associates with the motor protein KIF17 to transport vesicles along microtubules. Forms a heterotrimeric complex composed of MMP5, LIN7B and PATJ; the N-terminal L27 domain of PALS1 interacts with the L27 domain of PATJ and the C-terminal L27 domain of PALS1 interacts with the L27 domain of LIN7B. Forms a heterotrimeric complex with DLG1 and CASK via their L27 domains. Interacts with DLG4 and GRIN2B as well as CDH1 and CTNNB1, the channels KCNJ12/Kir2.2, KCNJ4/Kir2.3 and probably KCNJ2/Kir2.1 and SLC6A12/BGT-1 via its PDZ domain. The association of LIN7A with cadherin and beta-catenin is calcium-dependent, occurs at synaptic junctions and requires the actin cytoskeleton. Interacts with EGFR, ERBB2, ERBB3 and ERBB4 with both PDZ and KID domains. Associates with KIF17 via APBA1. Interacts with ASIC3. Interacts with TOPK. Interacts with RTKN. Interacts with APBA1. Interacts with MPP7. Interacts with DLG2. Interacts with DLG3. In terms of tissue distribution, expressed only in brain.

Its subcellular location is the cell membrane. It localises to the basolateral cell membrane. The protein localises to the cell junction. It is found in the postsynaptic density membrane. The protein resides in the tight junction. In terms of biological role, plays a role in establishing and maintaining the asymmetric distribution of channels and receptors at the plasma membrane of polarized cells. Forms membrane-associated multiprotein complexes that may regulate delivery and recycling of proteins to the correct membrane domains. The tripartite complex composed of LIN7 (LIN7A, LIN7B or LIN7C), CASK and APBA1 associates with the motor protein KIF17 to transport vesicles containing N-methyl-D-aspartate (NMDA) receptor subunit NR2B along microtubules. This complex may have the potential to couple synaptic vesicle exocytosis to cell adhesion in brain. Ensures the proper localization of GRIN2B (subunit 2B of the NMDA receptor) to neuronal postsynaptic density and may function in localizing synaptic vesicles at synapses where it is recruited by beta-catenin and cadherin. Required to localize Kir2 channels, GABA transporter (SLC6A12) and EGFR/ERBB1, ERBB2, ERBB3 and ERBB4 to the basolateral membrane of epithelial cells. May increase the amplitude of ASIC3 acid-evoked currents by stabilizing the channel at the cell surface. The polypeptide is Protein lin-7 homolog B (Lin7b) (Rattus norvegicus (Rat)).